A 79-amino-acid polypeptide reads, in one-letter code: Mipartoxin-3 (79 aa).

An N-terminal signal peptide occupies residues 1 to 21 (MKTLLLTLVVVTIVCLDLGNS). Cystine bridges form between Cys24–Cys41, Cys34–Cys59, Cys63–Cys71, and Cys72–Cys77.

The protein belongs to the three-finger toxin family. Short-chain subfamily. As to expression, expressed by the venom gland.

The protein localises to the secreted. In terms of biological role, snake venom neurotoxin that blocks neuromuscular transmission, presenting a postsynaptic action through the nicotinic acetylcholine receptor (nAChR). Has no cytotoxic activity. This chain is Mipartoxin-3, found in Micrurus mipartitus (Red-tailed coral snake).